A 152-amino-acid polypeptide reads, in one-letter code: Transcriptional repressor NrdR (152 aa).

The segment at 3-33 is a zinc-finger region; sequence CSICKKGETSVVDSRPTEDGTAIRRRRLCVC. The region spanning 48-138 is the ATP-cone domain; the sequence is IMVVKKNGRK…VYRNFREEKD (91 aa).

The protein belongs to the NrdR family. Zn(2+) is required as a cofactor.

Its function is as follows. Negatively regulates transcription of bacterial ribonucleotide reductase nrd genes and operons by binding to NrdR-boxes. The protein is Transcriptional repressor NrdR of Pelagibacter ubique (strain HTCC1062).